A 430-amino-acid polypeptide reads, in one-letter code: MEIKKINDQKVQYFFEVSSKELETQLASAYEKIKPKVEIKGFRKGHVPRKIFENRFGKDNLYSDALENIVQTKYQEVLQKKDFESMGMPQVIDLDEKKLKDNQNFTFGLEFIVKPKVTLKKYLGLEITKDDLEVTDYEVEEKINSLLEKQTTLESKTQNDFLELTDIAIFDFEGFVDDKPFEGGTAKDFSLEIGSGQFVPGFEDQMLGMKQGQTKDINITFPSDYHQKSLANQKAVFKVTLHQIKTKKIPQLTDNLVKSLKLVNASTVEELKNNTKQTLLAQKKHKEKENVEKQVIEQLVKNSELEIPQEIVSQEQIRLQKEFEAQLKQQNLTLEQYKQYLGIDDEKMEKEFSQQAQKNIEYQLIMEQVAAQEKLTISQEKIEQKYQNLSNHYKVPVNQIKQNLPEKNLKHSLLMGEALELVINKAVVAK.

The 86-residue stretch at 165–250 folds into the PPIase FKBP-type domain; that stretch reads TDIAIFDFEG…LHQIKTKKIP (86 aa).

Belongs to the FKBP-type PPIase family. Tig subfamily.

The protein localises to the cytoplasm. The enzyme catalyses [protein]-peptidylproline (omega=180) = [protein]-peptidylproline (omega=0). Involved in protein export. Acts as a chaperone by maintaining the newly synthesized protein in an open conformation. Functions as a peptidyl-prolyl cis-trans isomerase. This is Trigger factor from Onion yellows phytoplasma (strain OY-M).